Here is a 376-residue protein sequence, read N- to C-terminus: Queuine tRNA-ribosyltransferase (376 aa).

D89 functions as the Proton acceptor in the catalytic mechanism. Residues D89–F93, D143, Q194, and G221 contribute to the substrate site. Residues G252–N258 form an RNA binding region. D271 acts as the Nucleophile in catalysis. Residues A276–R280 form an RNA binding; important for wobble base 34 recognition region. Zn(2+)-binding residues include C309, C311, C314, and H340.

This sequence belongs to the queuine tRNA-ribosyltransferase family. Homodimer. Within each dimer, one monomer is responsible for RNA recognition and catalysis, while the other monomer binds to the replacement base PreQ1. The cofactor is Zn(2+).

The enzyme catalyses 7-aminomethyl-7-carbaguanine + guanosine(34) in tRNA = 7-aminomethyl-7-carbaguanosine(34) in tRNA + guanine. Its pathway is tRNA modification; tRNA-queuosine biosynthesis. Catalyzes the base-exchange of a guanine (G) residue with the queuine precursor 7-aminomethyl-7-deazaguanine (PreQ1) at position 34 (anticodon wobble position) in tRNAs with GU(N) anticodons (tRNA-Asp, -Asn, -His and -Tyr). Catalysis occurs through a double-displacement mechanism. The nucleophile active site attacks the C1' of nucleotide 34 to detach the guanine base from the RNA, forming a covalent enzyme-RNA intermediate. The proton acceptor active site deprotonates the incoming PreQ1, allowing a nucleophilic attack on the C1' of the ribose to form the product. After dissociation, two additional enzymatic reactions on the tRNA convert PreQ1 to queuine (Q), resulting in the hypermodified nucleoside queuosine (7-(((4,5-cis-dihydroxy-2-cyclopenten-1-yl)amino)methyl)-7-deazaguanosine). This chain is Queuine tRNA-ribosyltransferase, found in Clostridium botulinum (strain Hall / ATCC 3502 / NCTC 13319 / Type A).